Reading from the N-terminus, the 194-residue chain is Imidazoleglycerol-phosphate dehydratase (194 aa).

The protein belongs to the imidazoleglycerol-phosphate dehydratase family.

The protein resides in the cytoplasm. The catalysed reaction is D-erythro-1-(imidazol-4-yl)glycerol 3-phosphate = 3-(imidazol-4-yl)-2-oxopropyl phosphate + H2O. Its pathway is amino-acid biosynthesis; L-histidine biosynthesis; L-histidine from 5-phospho-alpha-D-ribose 1-diphosphate: step 6/9. The sequence is that of Imidazoleglycerol-phosphate dehydratase from Bacillus anthracis (strain A0248).